The chain runs to 86 residues: Beta-toxin Tz1 (86 aa).

Positions 1–20 (MTRFVLFICCFFLIGMVVEC) are cleaved as a signal peptide. Positions 21-83 (KDGYLVGNDG…TWDRATNRCG (63 aa)) constitute an LCN-type CS-alpha/beta domain. Cystine bridges form between C31/C82, C35/C57, C43/C63, and C47/C65. An Arginine amide modification is found at R84.

Belongs to the long (4 C-C) scorpion toxin superfamily. Sodium channel inhibitor family. Beta subfamily. Expressed by the venom gland.

The protein localises to the secreted. Its function is as follows. Beta toxins bind voltage-independently at site-4 of sodium channels (Nav) and shift the voltage of activation toward more negative potentials thereby affecting sodium channel activation and promoting spontaneous and repetitive firing. Strongly affects skeletal muscle channels Nav1.4/SCN4A, poorly affects the neuronal channels Nav1.6/SCN8A and Nav1.2/SCN2A. Induces spastic paralysis of rear limbs, increased salivation, apnea, tachycardia and increased perspiration. The protein is Beta-toxin Tz1 of Tityus zulianus (Venezuelan scorpion).